The sequence spans 414 residues: MAVSTSHFRSLCASRPLSRTAIVGHISCRSYATTEPSPSATSTSTTTTARRRTTFKDKLNAGPSFADFVGNGNTPLDPSEAYALKTALVGPAGRKKEMTRLPSWLKTPIPDSKNYQRLKKDLRGLNLHTVCEEARCPNISDCWGGSDKSAATATIMLMGDTCTRGCRFCSVKTSRTPAPLDPHEPENTAEAISRWGLGYVVLTSVDRDDLADGGARHFAETVMKIKQKAPSILVECLTGDYAGDLEMVKLVARSGLDVYAHNVETVEALTPQVRDRRANFQQSIRVLEAAKNAQPSLITKTSLMLGLGETDDQLWDALRQLRAANVDVVTFGQYMRPTKRHMAVHEYVTPDRFELWRQRALDMGFLYCASGPLVRSSYKAGEAFIENVLKKRRATSGGTETVGVRPVTVDEVTR.

A mitochondrion-targeting transit peptide spans 1-31; that stretch reads MAVSTSHFRSLCASRPLSRTAIVGHISCRSY. The tract at residues 31 to 51 is disordered; that stretch reads YATTEPSPSATSTSTTTTARR. A compositionally biased stretch (low complexity) spans 32 to 48; it reads ATTEPSPSATSTSTTTT. Residues C131, C136, C142, C162, C166, C169, and S377 each coordinate [4Fe-4S] cluster. The Radical SAM core domain occupies 145–366; sequence GSDKSAATAT…RQRALDMGFL (222 aa).

This sequence belongs to the radical SAM superfamily. Lipoyl synthase family. The cofactor is [4Fe-4S] cluster.

The protein resides in the mitochondrion. It carries out the reaction [[Fe-S] cluster scaffold protein carrying a second [4Fe-4S](2+) cluster] + N(6)-octanoyl-L-lysyl-[protein] + 2 oxidized [2Fe-2S]-[ferredoxin] + 2 S-adenosyl-L-methionine + 4 H(+) = [[Fe-S] cluster scaffold protein] + N(6)-[(R)-dihydrolipoyl]-L-lysyl-[protein] + 4 Fe(3+) + 2 hydrogen sulfide + 2 5'-deoxyadenosine + 2 L-methionine + 2 reduced [2Fe-2S]-[ferredoxin]. The protein operates within protein modification; protein lipoylation via endogenous pathway; protein N(6)-(lipoyl)lysine from octanoyl-[acyl-carrier-protein]: step 2/2. In terms of biological role, catalyzes the radical-mediated insertion of two sulfur atoms into the C-6 and C-8 positions of the octanoyl moiety bound to the lipoyl domains of lipoate-dependent enzymes, thereby converting the octanoylated domains into lipoylated derivatives. In Aspergillus fumigatus (strain CBS 144.89 / FGSC A1163 / CEA10) (Neosartorya fumigata), this protein is Lipoyl synthase, mitochondrial.